The chain runs to 932 residues: MAPPQGKPENVLRLADELIALDQHSSALQSLHETIVLKRSRNAQGFSLEPIMMRFIELCVHLRKGKIAKEGLYTYKNAVQNTSVTAIENVVKHFIELANKRVQEAQEKADKISVEYVDDLEATETPESIMMSLVSGDLSKSRTDRALVTPWLKFLWDAYRTVLDILRNNARLEVMYQLIANSAFQFCLKYQRKTEFRRLCELLRSHLGNASKFSNAPHSINLNDAETMQRHLDMRFSQLNVAVELELWQEAFRSIEDIHSLLTFSKRAPAAVMLGNYYRKLIKIFLVCDNYLLHAAAWNRYFTFTNVQKPATANFVILSALSIPIIDANKLSGPSIEAEDAKSKNARLALLLNLSKTPTRETLIKDAISRGVLSFCDQAIRDLYQILEVEFHPLSICKKLQPIIKRLAESNDTAQYIRPLQQVILTRLFQQLSQVYDSISLKYVMDLATFEEPYDFNPGQIEKFIMNGNKKGAFSIRLNHIENSISFSSDLFSNPIKSSDSVSLQSTPSELITSQLTRIAKSLSSVLMRFDTDFCLLRKQQAEAAYERAQAGVEQERKAVIAQRSLLELRRGQADTLATQREAELAAQRALKQKQESEAESLRVQEEINKRNAERIRREKEAIRINEAKKLAEELKAKGGLEVNAEDLEHLDADKLRAMQIEQVEKQNKSMNERLRVIGKRIDHLERAYRREAIPLWEEDAKQQAEHDREIFYEREKQRKEVQERKHEQAIKDKKAFAQFASYIHAYKQNIDDERDKAYQEAYAKAKNVIDAERERQRKEIFEQKLAEAIREAEEEAARAAEEEANRELHEQEEAQKRAIEERTRAAREAKEREQREMAEKLERQRRIQQERDEEISRKLAEKAAARRANIGASSPSPGAWRRGGASAGGVSRDSPRYSRGGYSRGSVPPRETLAPSKGAYVPPSRRNQQQQ.

Residues 309–492 (KPATANFVIL…NSISFSSDLF (184 aa)) enclose the PCI domain. Ser-374 and Ser-501 each carry phosphoserine. Residues 537–862 (LRKQQAEAAY…DEEISRKLAE (326 aa)) are a coiled coil. Positions 793 to 865 (AEEEAARAAE…ISRKLAEKAA (73 aa)) are enriched in basic and acidic residues. A disordered region spans residues 793 to 932 (AEEEAARAAE…PPSRRNQQQQ (140 aa)). Phosphoserine occurs at positions 874, 875, and 877. Residues 877–893 (SPGAWRRGGASAGGVSR) are compositionally biased toward low complexity.

It belongs to the eIF-3 subunit A family. In terms of assembly, component of the eukaryotic translation initiation factor 3 (eIF-3) complex. The eIF-3 complex appears to include tif32/eif3a, SPAC25G10.08/eif3b, tif33/eif3c, SPBC4C3.07/eif3f, tif35/eif3g and sum1/eif3i. This set of common subunits may also associate exclusively with either moe1/eif3d and int6/eif3e, or with SPAC821.05/eif3h and SPAC1751.03/eif3m. The eIF-3 complex may also include SPAC3A12.13c/eif3j.

It localises to the cytoplasm. RNA-binding component of the eukaryotic translation initiation factor 3 (eIF-3) complex, which is involved in protein synthesis of a specialized repertoire of mRNAs and, together with other initiation factors, stimulates binding of mRNA and methionyl-tRNAi to the 40S ribosome. The eIF-3 complex specifically targets and initiates translation of a subset of mRNAs involved in cell proliferation. The protein is Eukaryotic translation initiation factor 3 subunit A (tif32) of Schizosaccharomyces pombe (strain 972 / ATCC 24843) (Fission yeast).